The chain runs to 106 residues: Gibberellin-regulated protein 12 (106 aa).

The signal sequence occupies residues 1–22; the sequence is MMKLIVVFVISSLLFATQFSNG.

This sequence belongs to the GASA family. In terms of processing, six disulfide bonds may be present.

It is found in the secreted. Gibberellin-regulated protein that may function in hormonal controlled steps of development such as seed germination, flowering and seed maturation. In Arabidopsis thaliana (Mouse-ear cress), this protein is Gibberellin-regulated protein 12 (GASA12).